Consider the following 330-residue polypeptide: Aspartate--ammonia ligase (330 aa).

The protein belongs to the class-II aminoacyl-tRNA synthetase family. AsnA subfamily.

Its subcellular location is the cytoplasm. It catalyses the reaction L-aspartate + NH4(+) + ATP = L-asparagine + AMP + diphosphate + H(+). It functions in the pathway amino-acid biosynthesis; L-asparagine biosynthesis; L-asparagine from L-aspartate (ammonia route): step 1/1. The chain is Aspartate--ammonia ligase from Escherichia coli O45:K1 (strain S88 / ExPEC).